The following is a 443-amino-acid chain: MTRKYFGTDGIRGTVGQPPITPDFVLRLAHAVGRVLRRVESRPTVLIGKDTRISGYMLESALESGFNSAGVDVVLLGPLPTPGVAYLTRAQRASLGVVISASHNAYPDNGIKFFSAQGTKLSDEWELAVEAALEEPPVWVDSATLGKARRLDDAAGRYIEFCKSTFAHDLTLKGLKIVVDGAHGAAYHIAPKVFHELGAEVIAIGCAPDGLNINHEVGATHPEALITAVKANQADYGIALDGDADRLQMVDADGRLFNGDEVLFLMVSERLARGEKVPGTVGTLMTNMAVELALKSRGVEFVRAKVGDRYVLEELEKRGWLLGGEGSGHLLALDKHTTGDGLISALQVLQACVRSGKTIAQLLGDVVLFPQTLVNVRLKPGQDWKASEKLALETKAVEAELGDTGRLLIRASGTEPLLRVMVEARDARQAKACAERVADTVRS.

The Phosphoserine intermediate role is filled by serine 102. Residues serine 102, aspartate 241, aspartate 243, and aspartate 245 each contribute to the Mg(2+) site. The residue at position 102 (serine 102) is a Phosphoserine.

Belongs to the phosphohexose mutase family. The cofactor is Mg(2+). In terms of processing, activated by phosphorylation.

It carries out the reaction alpha-D-glucosamine 1-phosphate = D-glucosamine 6-phosphate. In terms of biological role, catalyzes the conversion of glucosamine-6-phosphate to glucosamine-1-phosphate. The polypeptide is Phosphoglucosamine mutase (Polaromonas sp. (strain JS666 / ATCC BAA-500)).